The sequence spans 426 residues: MRFKFPLMAIGLEVVMIVLFALFVQYETSVNTSRNPNETESAAMDVEKTMESYPFFQDVHIMVFAGFGFLMTFLWKYGFSGVGINLLIAALGLQWGTIIQGIFRSHGQKFLIEMKNMIHADFSTVTVLISFGAVLGKTSPVQMLIMTILEITVYAANEYLVFKILWASDTGESMTIHAFGAYFGLAVAGILYRSGLKEKHSNEESVYHSDLFAMIGSLFLWIFWPSFNSATADEAKKQYRAIVNTYFSLAASVVTAYACSSLLESRGKLNMVHIQNATLAGGVAVGTCADMEIPPYYAMIIGSIAGAVSVFGFKFLTPLFTTKLRIHDTCGVHNLHGLPGVIGGLAGIITVALEESDSTKTVSQAAALGSSIATALVGGLITGAILKIPFWAQPPDEDCYDDSVYWEVPERKEYDNHFHELLSTLH.

Residues 1–4 (MRFK) lie on the Cytoplasmic side of the membrane. A helical membrane pass occupies residues 5–25 (FPLMAIGLEVVMIVLFALFVQ). Residues 26–54 (YETSVNTSRNPNETESAAMDVEKTMESYP) lie on the Extracellular side of the membrane. N31 and N37 each carry an N-linked (GlcNAc...) asparagine glycan. A helical transmembrane segment spans residues 55-75 (FFQDVHIMVFAGFGFLMTFLW). Residues 76–78 (KYG) are Cytoplasmic-facing. A helical transmembrane segment spans residues 79 to 99 (FSGVGINLLIAALGLQWGTII). Residues 100-124 (QGIFRSHGQKFLIEMKNMIHADFST) lie on the Extracellular side of the membrane. The next 2 membrane-spanning stretches (helical) occupy residues 125 to 145 (VTVLISFGAVLGKTSPVQMLI) and 146 to 166 (MTILEITVYAANEYLVFKILW). The Extracellular segment spans residues 167–170 (ASDT). Residues 171–191 (GESMTIHAFGAYFGLAVAGIL) form a helical membrane-spanning segment. The Cytoplasmic portion of the chain corresponds to 192–210 (YRSGLKEKHSNEESVYHSD). Residues 211–231 (LFAMIGSLFLWIFWPSFNSAT) form a helical membrane-spanning segment. At 232–241 (ADEAKKQYRA) the chain is on the extracellular side. The chain crosses the membrane as a helical span at residues 242-262 (IVNTYFSLAASVVTAYACSSL). The Cytoplasmic portion of the chain corresponds to 263–270 (LESRGKLN). Residues 271–288 (MVHIQNATLAGGVAVGTC) form a helical membrane-spanning segment. At 289–292 (ADME) the chain is on the extracellular side. Residues 293-313 (IPPYYAMIIGSIAGAVSVFGF) form a helical membrane-spanning segment. At 314 to 331 (KFLTPLFTTKLRIHDTCG) the chain is on the cytoplasmic side. The helical transmembrane segment at 332-352 (VHNLHGLPGVIGGLAGIITVA) threads the bilayer. The Extracellular portion of the chain corresponds to 353–371 (LEESDSTKTVSQAAALGSS). The helical transmembrane segment at 372–392 (IATALVGGLITGAILKIPFWA) threads the bilayer. Residues 393-426 (QPPDEDCYDDSVYWEVPERKEYDNHFHELLSTLH) lie on the Cytoplasmic side of the membrane.

The protein belongs to the ammonium transporter (TC 2.A.49) family. Rh subfamily. In terms of assembly, homodimer. Heterotrimer; a RHCE monomer interacts with a RHAG homodimer. Component of the ankyrin-1 complex in the erythrocyte, composed of ANK1, RHCE, RHAG, SLC4A1, EPB42, GYPA, GYPB and AQP1. Interacts with GYPB (via the N-terminal); this interaction bridges the (RHAG)2(RHCE) heterotrimer with the SLC4A1 Band 3 I dimer complexed with GYPA. In terms of processing, glycosylated.

The protein resides in the membrane. The enzyme catalyses methylamine(out) = methylamine(in). The catalysed reaction is NH4(+)(in) = NH4(+)(out). It catalyses the reaction CO2(out) = CO2(in). Its function is as follows. Component of the ankyrin-1 complex, a multiprotein complex involved in the stability and shape of the erythrocyte membrane. Heterotrimer with RHCE (RHAG)2(RHCE), that transports ammonium and its related derivative methylammonium, in both neutral and ionic forms, across the erythrocyte membrane. The transport of NH4(+) is electrogenic and masks the NH3 transport. Also, may act as a CO2 channel. Moreover in erythrocyte, regulates RHD membrane expression and is associated with rhesus blood group antigen expression. The polypeptide is Ammonium transporter Rh type A (Bos taurus (Bovine)).